The following is a 58-amino-acid chain: Probable ferredoxin (58 aa).

2 consecutive 4Fe-4S ferredoxin-type domains span residues Val-2–Asp-30 and Gly-31–Glu-58. Residues Cys-10, Cys-13, Cys-16, Cys-20, Cys-40, Cys-43, Cys-46, and Cys-50 each contribute to the [4Fe-4S] cluster site.

It depends on [4Fe-4S] cluster as a cofactor.

In terms of biological role, ferredoxins are iron-sulfur proteins that transfer electrons in a wide variety of metabolic reactions. The polypeptide is Probable ferredoxin (Methanosarcina thermophila).